An 86-amino-acid chain; its full sequence is Cell division topological specificity factor (86 aa).

It belongs to the MinE family.

Its function is as follows. Prevents the cell division inhibition by proteins MinC and MinD at internal division sites while permitting inhibition at polar sites. This ensures cell division at the proper site by restricting the formation of a division septum at the midpoint of the long axis of the cell. The sequence is that of Cell division topological specificity factor from Shewanella loihica (strain ATCC BAA-1088 / PV-4).